The following is a 592-amino-acid chain: Sodium- and chloride-dependent transporter XTRP3A (592 aa).

At 1 to 7 (MEKARPQ) the chain is on the cytoplasmic side. The chain crosses the membrane as a helical span at residues 8 to 28 (WGHPLQFVFACISYAVGLGNV). Over 29–42 (WRFPYLCQMYGGGS) the chain is Extracellular. The helical transmembrane segment at 43–63 (FLVPYIIMLIVEGMPLLYLEL) threads the bilayer. Topologically, residues 64 to 79 (AVGQRMRQGSIGAWRT) are cytoplasmic. A helical membrane pass occupies residues 80 to 100 (ISPYLSGVGVASVVVSFFLSM). The Extracellular portion of the chain corresponds to 101–165 (YYNVINAWGF…ISPSIQENGG (65 aa)). A glycan (N-linked (GlcNAc...) asparagine) is linked at N131. A helical membrane pass occupies residues 166 to 186 (VQWEPALCLTLAWLMVYLCIL). The Cytoplasmic segment spans residues 187 to 194 (RGTESTGK). A helical membrane pass occupies residues 195 to 215 (VVYFTASMPYCVLIIYLVRGL). Over 216–241 (TLHGATNGLMYMFTPKMEQLANPKAW) the chain is Extracellular. Residues 242-262 (INAATQIFFSLGLGFGSLIAF) form a helical membrane-spanning segment. At 263 to 276 (ASYNEPSNNCQKHA) the chain is on the cytoplasmic side. Residues 277 to 297 (IIVSIINSSTSIFASIVTFSI) traverse the membrane as a helical segment. At 298–389 (YGFKATFNYE…EAIKNMEVSQ (92 aa)) the chain is on the extracellular side. The chain crosses the membrane as a helical span at residues 390–410 (LWSVLYFFMLLMLGIGSMLGN). Topologically, residues 411–431 (TAAILTPLTDSKVISSYLPKE) are cytoplasmic. A helical transmembrane segment spans residues 432–452 (AISGLVCLINCAVGMVFTMEA). The Extracellular segment spans residues 453–465 (GNYWFDIFNDYAA). The helical transmembrane segment at 466–486 (TLSLLLIVLVETIAVCYVYGL) threads the bilayer. Residues 487–504 (KRFESDLRAMTGRTLSWY) are Cytoplasmic-facing. Residues 505–525 (WKVMWAFVSPLLIVGLFIFYL) form a helical membrane-spanning segment. Over 526 to 554 (SDYILTGTLQYQAWDATQGQLVTKDYPPH) the chain is Extracellular. The helical transmembrane segment at 555 to 575 (ALAVIGLLVASSTMCIPLVAL) threads the bilayer. Topologically, residues 576 to 592 (GTFIRNRLKRGGSAPVA) are cytoplasmic.

This sequence belongs to the sodium:neurotransmitter symporter (SNF) (TC 2.A.22) family. SLC6A20 subfamily. As to expression, expressed in brain, kidney, small intestine, thymus, spleen and lung. In the brain, expressed in cerebellum, cortex and brain stem. Not detected in liver, muscle or heart. In brain, widespread in various regions, including the meninges, choroid plexus, cortex, hippocampus and thalamus.

It localises to the apical cell membrane. It carries out the reaction L-proline(out) + chloride(out) + 2 Na(+)(out) = L-proline(in) + chloride(in) + 2 Na(+)(in). The enzyme catalyses 4-hydroxy-L-proline(out) + chloride(out) + 2 Na(+)(out) = 4-hydroxy-L-proline(in) + chloride(in) + 2 Na(+)(in). The catalysed reaction is 2-methyl-2-(methylamino)propanoate(out) + chloride(out) + 2 Na(+)(out) = 2-methyl-2-(methylamino)propanoate(in) + chloride(in) + 2 Na(+)(in). It catalyses the reaction L-pipecolate(out) + chloride(out) + 2 Na(+)(out) = L-pipecolate(in) + chloride(in) + 2 Na(+)(in). It carries out the reaction glycine betaine(out) + chloride(out) + 2 Na(+)(out) = glycine betaine(in) + chloride(in) + 2 Na(+)(in). The enzyme catalyses glycine(out) + chloride(out) + 2 Na(+)(out) = glycine(in) + chloride(in) + 2 Na(+)(in). Mediates the Na(+)- and Cl(-)-dependent uptake of imino acids such as L-proline, N-methyl-L-proline and pipecolate as well as N-methylated amino acids. Also transports glycine, regulates proline and glycine homeostasis in the brain playing a role in the modulation of NMDAR currents. The sequence is that of Sodium- and chloride-dependent transporter XTRP3A from Mus musculus (Mouse).